Here is a 1347-residue protein sequence, read N- to C-terminus: G-protein coupled receptor-associated sorting protein 1 (1347 aa).

Disordered regions lie at residues M1–K75, E145–R174, and D188–S281. Residues E21 to P33 show a composition bias toward low complexity. The segment covering F211–M226 has biased composition (basic residues). Residues P263–N278 are compositionally biased toward basic and acidic residues. S295 carries the phosphoserine modification. Disordered stretches follow at residues G310 to G344, F364 to R396, and Q460 to M485. Residues R316–V325 are compositionally biased toward basic residues. Residues K370 to R396 show a composition bias toward basic and acidic residues. Residues V461–S484 are compositionally biased toward polar residues. 2 positions are modified to phosphoserine: S619 and S626. At T860 the chain carries Phosphothreonine. At S862 the chain carries Phosphoserine.

Belongs to the GPRASP family. Interacts with cytoplasmic tails of a variety of G-protein coupled receptors such as delta opioid receptor/OPRD1, beta-2 adrenergic receptor/ADRB2 and D4 dopamine receptor/DRD4 as well as D2 dopamine receptor/DRD2. Interacts with PER1. Interacts with BECN2; the interaction is direct. In terms of tissue distribution, expressed in the brain, with higher expression in the hippocampus, hypothalamus and olfactory bulb.

The protein resides in the cytoplasm. Modulates lysosomal sorting and functional down-regulation of a variety of G-protein coupled receptors. Targets receptors for degradation in lysosomes via its interaction with BECN2. The sequence is that of G-protein coupled receptor-associated sorting protein 1 (Gprasp1) from Mus musculus (Mouse).